Reading from the N-terminus, the 321-residue chain is Mas-related G-protein coupled receptor member B4 (321 aa).

At Met1 to Asn33 the chain is on the extracellular side. Asn11 and Asn16 each carry an N-linked (GlcNAc...) asparagine glycan. A helical membrane pass occupies residues Phe34–Leu54. Residues Ala55 to Ala62 lie on the Cytoplasmic side of the membrane. A helical membrane pass occupies residues Phe63–Val83. At His84–Phe97 the chain is on the extracellular side. N-linked (GlcNAc...) asparagine glycosylation occurs at Asn94. A helical transmembrane segment spans residues Tyr98–Ile118. At Ser119–Ala146 the chain is on the cytoplasmic side. Residues Leu147–Phe167 form a helical membrane-spanning segment. The Extracellular portion of the chain corresponds to Ser168–Tyr172. A helical membrane pass occupies residues Tyr173 to Leu193. Residues Ser194 to Arg215 are Cytoplasmic-facing. A helical membrane pass occupies residues Phe216–Ile236. Residues Cys237–Glu257 lie on the Extracellular side of the membrane. Residues Ile258–Gly278 traverse the membrane as a helical segment. The Cytoplasmic portion of the chain corresponds to Ser279 to Val321. The interval Gln299–Val321 is disordered.

It belongs to the G-protein coupled receptor 1 family. Mas subfamily.

It is found in the membrane. In terms of biological role, orphan receptor. Probably involved in the function of nociceptive neurons. May regulate nociceptor function and/or development, including the sensation or modulation of pain. The polypeptide is Mas-related G-protein coupled receptor member B4 (Mrgprb4) (Mus musculus (Mouse)).